The sequence spans 217 residues: 3-demethoxyubiquinol 3-hydroxylase (217 aa).

Fe cation contacts are provided by glutamate 66, glutamate 96, histidine 99, glutamate 148, glutamate 180, and histidine 183.

It belongs to the COQ7 family. Fe cation is required as a cofactor.

The protein resides in the cell membrane. It catalyses the reaction a 5-methoxy-2-methyl-3-(all-trans-polyprenyl)benzene-1,4-diol + AH2 + O2 = a 3-demethylubiquinol + A + H2O. The protein operates within cofactor biosynthesis; ubiquinone biosynthesis. Catalyzes the hydroxylation of 2-nonaprenyl-3-methyl-6-methoxy-1,4-benzoquinol during ubiquinone biosynthesis. This chain is 3-demethoxyubiquinol 3-hydroxylase, found in Ralstonia pickettii (strain 12J).